A 419-amino-acid chain; its full sequence is S-adenosylmethionine synthase (419 aa).

His15 lines the ATP pocket. Asp17 provides a ligand contact to Mg(2+). Glu43 contacts K(+). The L-methionine site is built by Glu56 and Gln100. The flexible loop stretch occupies residues 100 to 110; the sequence is QSPDIAQGVNE. ATP-binding positions include 171-173, 248-249, Asp257, 263-264, Ala280, and Lys284; these read DGK, KF, and RK. Residue Asp257 coordinates L-methionine. Lys288 is a binding site for L-methionine.

It belongs to the AdoMet synthase family. Homotetramer; dimer of dimers. Requires Mg(2+) as cofactor. K(+) is required as a cofactor.

It is found in the cytoplasm. It carries out the reaction L-methionine + ATP + H2O = S-adenosyl-L-methionine + phosphate + diphosphate. It participates in amino-acid biosynthesis; S-adenosyl-L-methionine biosynthesis; S-adenosyl-L-methionine from L-methionine: step 1/1. Functionally, catalyzes the formation of S-adenosylmethionine (AdoMet) from methionine and ATP. The overall synthetic reaction is composed of two sequential steps, AdoMet formation and the subsequent tripolyphosphate hydrolysis which occurs prior to release of AdoMet from the enzyme. This is S-adenosylmethionine synthase from Prochlorococcus marinus (strain MIT 9313).